Here is a 534-residue protein sequence, read N- to C-terminus: MHEDAPKMSIAQSLAASTSQPKGDIVTEIPLEFAMSSMETKSIETTNVELKITYVDPTTGTGGEPGAYLPTAGTVCDQTDTKDVIEELCPVCGDKVSGYHYGLLTCESCKGFFKRTVQNKKVYTCVAERACHIDKTQRKRCPFCRFQKCLDVGMKLEAVRADRMRGGRNKFGPMYKRDRARKLQMMRQRQIAVQTLRGSLGDGGLVLGFGSPYTAVSVKQEIQIPQVSSLTSSPESSPGPALLGAQPQPPQPPPPPTHDKWEAHSPHSASPDAFTFDTQSNTAATPSSTAEATSTETLRVSPMIREFVQTVDDREWQNALFGLLQSQTYNQCEVDLFELMCKVLDQNLFSQVDWARNTVFFKYLKVDDQMKLLQDSWSVMLVLDHLHQRMHNGLPDETTLHNGQKFDLLCLGLLGVPSLADHFNELQNKLAELKFDVPDYICVKFMLLLNPEVRGIVNVKCVREGYQTVQAALLDYTLTCYPTIQDKFGKLVMVVPEIHALAARGEEHLYQRHCAGQAPTQTLLMEMLHAKRKS.

Positions 86–161 (EELCPVCGDK…VGMKLEAVRA (76 aa)) form a DNA-binding region, nuclear receptor. 2 consecutive NR C4-type zinc fingers follow at residues 89–109 (CPVCGDKVSGYHYGLLTCESC) and 125–149 (CVAERACHIDKTQRKRCPFCRFQKC). The segment covering 227 to 246 (VSSLTSSPESSPGPALLGAQ) has biased composition (low complexity). Residues 227-296 (VSSLTSSPES…SSTAEATSTE (70 aa)) form a disordered region. The segment covering 247 to 256 (PQPPQPPPPP) has biased composition (pro residues). Low complexity predominate over residues 278–296 (TQSNTAATPSSTAEATSTE). The region spanning 299-531 (RVSPMIREFV…TLLMEMLHAK (233 aa)) is the NR LBD domain.

The protein belongs to the nuclear hormone receptor family. NR5 subfamily. In terms of tissue distribution, present in all tissues examined.

The protein resides in the nucleus. Its function is as follows. May play an important role in development. The protein is Nuclear hormone receptor FTZ-F1 (FTZ-F1) of Bombyx mori (Silk moth).